Consider the following 318-residue polypeptide: Porphobilinogen deaminase (318 aa).

Position 241 is an S-(dipyrrolylmethanemethyl)cysteine (C241).

The protein belongs to the HMBS family. As to quaternary structure, monomer. It depends on dipyrromethane as a cofactor.

It carries out the reaction 4 porphobilinogen + H2O = hydroxymethylbilane + 4 NH4(+). Its pathway is porphyrin-containing compound metabolism; protoporphyrin-IX biosynthesis; coproporphyrinogen-III from 5-aminolevulinate: step 2/4. Its function is as follows. Tetrapolymerization of the monopyrrole PBG into the hydroxymethylbilane pre-uroporphyrinogen in several discrete steps. The protein is Porphobilinogen deaminase of Geotalea uraniireducens (strain Rf4) (Geobacter uraniireducens).